The chain runs to 197 residues: Large ribosomal subunit protein uL11 (197 aa).

Belongs to the universal ribosomal protein uL11 family. In terms of assembly, part of the ribosomal stalk of the 50S ribosomal subunit. Interacts with L10 and the large rRNA to form the base of the stalk. L10 forms an elongated spine to which L12 dimers bind in a sequential fashion forming a multimeric L10(L12)X complex. Post-translationally, one or more lysine residues are methylated.

In terms of biological role, forms part of the ribosomal stalk which helps the ribosome interact with GTP-bound translation factors. This Mycoplasmopsis pulmonis (strain UAB CTIP) (Mycoplasma pulmonis) protein is Large ribosomal subunit protein uL11.